Consider the following 324-residue polypeptide: Glyoxylate/hydroxypyruvate reductase B (324 aa).

Residues arginine 237 and glutamate 266 contribute to the active site. Histidine 285 serves as the catalytic Proton donor.

This sequence belongs to the D-isomer specific 2-hydroxyacid dehydrogenase family. GhrB subfamily. As to quaternary structure, homodimer.

The protein resides in the cytoplasm. The enzyme catalyses glycolate + NADP(+) = glyoxylate + NADPH + H(+). The catalysed reaction is (R)-glycerate + NAD(+) = 3-hydroxypyruvate + NADH + H(+). It carries out the reaction (R)-glycerate + NADP(+) = 3-hydroxypyruvate + NADPH + H(+). Its function is as follows. Catalyzes the NADPH-dependent reduction of glyoxylate and hydroxypyruvate into glycolate and glycerate, respectively. The sequence is that of Glyoxylate/hydroxypyruvate reductase B from Salmonella dublin (strain CT_02021853).